The sequence spans 126 residues: Holo-[acyl-carrier-protein] synthase (126 aa).

Residues Asp-9 and Glu-58 each coordinate Mg(2+).

Belongs to the P-Pant transferase superfamily. AcpS family. Mg(2+) serves as cofactor.

The protein resides in the cytoplasm. The enzyme catalyses apo-[ACP] + CoA = holo-[ACP] + adenosine 3',5'-bisphosphate + H(+). Its function is as follows. Transfers the 4'-phosphopantetheine moiety from coenzyme A to a Ser of acyl-carrier-protein. This is Holo-[acyl-carrier-protein] synthase from Vibrio parahaemolyticus serotype O3:K6 (strain RIMD 2210633).